Reading from the N-terminus, the 176-residue chain is Pectinesterase inhibitor 1 (176 aa).

An N-terminal signal peptide occupies residues 1-25; sequence MAANLRNNAFLSSLMFLLLIGSSYA. 2 disulfide bridges follow: Cys35–Cys44 and Cys98–Cys138. Residue Asn154 is glycosylated (N-linked (GlcNAc...) asparagine).

It belongs to the PMEI family. Monomer and homodimer. Interacts in vitro with PPME1. In terms of tissue distribution, highest expression in flowers. Expressed exclusively at the pollen tube tip.

It localises to the secreted. Its subcellular location is the extracellular space. It is found in the apoplast. In terms of biological role, inhibits pectin methylesterase (PME) from flowers and siliques. Inhibits PME from leaves. This chain is Pectinesterase inhibitor 1, found in Arabidopsis thaliana (Mouse-ear cress).